The primary structure comprises 893 residues: Serine/threonine-protein kinase PLK4 (893 aa).

A Protein kinase domain is found at F12–M265. Residues L18–V26 and K41 contribute to the ATP site. Residues K45 and K46 each carry the N6-acetyllysine modification. D136 acts as the Proton acceptor in catalysis. A compositionally biased stretch (polar residues) spans N349 to G358. The tract at residues N349–V393 is disordered. The segment covering V362–H371 has biased composition (basic and acidic residues). Phosphoserine occurs at positions 403 and 588. The region spanning T509–K622 is the Cryptic POLO box 1 (CPB1) domain. Residues S623–P736 enclose the Cryptic POLO box 2 (CPB2) domain. The segment at P730 to Y749 is disordered. The region spanning Q809–N887 is the POLO box domain.

It belongs to the protein kinase superfamily. Ser/Thr protein kinase family. CDC5/Polo subfamily. As to quaternary structure, homodimer. Interacts with CEP152 (via N-terminus). Interacts with CEP78; this interaction may be important for proper PLK4 localization to the centriole and PLK4-induced overduplication of centrioles. Interacts with CEP131. Interacts simultaneously with TENT5C and CEP192. Interacts with TENT5C; this interaction leads to the TENT5C recruitment in the centrosome. Interacts with CEP85; this interaction may be important in cell migration and centriole assembly. In terms of processing, ubiquitinated; leading to its degradation by the proteasome. Tyrosine-phosphorylated by TEC. Post-translationally, acetylation by KAT2A and KAT2B impairs kinase activity by shifting the kinase to an inactive conformation.

Its subcellular location is the cytoplasm. The protein localises to the cytoskeleton. It is found in the microtubule organizing center. It localises to the centrosome. The protein resides in the centriole. Its subcellular location is the nucleus. The protein localises to the nucleolus. It is found in the cleavage furrow. It catalyses the reaction L-seryl-[protein] + ATP = O-phospho-L-seryl-[protein] + ADP + H(+). It carries out the reaction L-threonyl-[protein] + ATP = O-phospho-L-threonyl-[protein] + ADP + H(+). Serine/threonine-protein kinase that plays a central role in centriole duplication. Able to trigger procentriole formation on the surface of the parental centriole cylinder, leading to the recruitment of centriole biogenesis proteins such as SASS6, CPAP, CCP110, CEP135 and gamma-tubulin. When overexpressed, it is able to induce centrosome amplification through the simultaneous generation of multiple procentrioles adjoining each parental centriole during S phase. Phosphorylates 'Ser-151' of FBXW5 during the G1/S transition, leading to inhibit FBXW5 ability to ubiquitinate SASS6. Its central role in centriole replication suggests a possible role in tumorigenesis, centrosome aberrations being frequently observed in tumors. Also involved in deuterosome-mediated centriole amplification in multiciliated that can generate more than 100 centrioles. Also involved in trophoblast differentiation by phosphorylating HAND1, leading to disrupt the interaction between HAND1 and MDFIC and activate HAND1. Phosphorylates CDC25C and CHEK2. Required for the recruitment of STIL to the centriole and for STIL-mediated centriole amplification. Phosphorylates CEP131 and PCM1 which is essential for proper organization and integrity of centriolar satellites. This Bos taurus (Bovine) protein is Serine/threonine-protein kinase PLK4.